The chain runs to 376 residues: Nuclear hormone receptor family member nhr-124 (376 aa).

The segment at residues 11 to 89 (PNICAICHQK…LGMRYHNSSE (79 aa)) is a DNA-binding region (nuclear receptor). NR C4-type zinc fingers lie at residues 14 to 34 (CAICHQKAFGYNYEVVSCNAC) and 50 to 72 (CKKGGKCFDGDDLLTSRPKCRSC). In terms of domain architecture, NR LBD spans 125 to 371 (HLHALNETRY…FSKILTEACR (247 aa)).

It belongs to the nuclear hormone receptor family.

It localises to the nucleus. In terms of biological role, orphan nuclear receptor. This Caenorhabditis elegans protein is Nuclear hormone receptor family member nhr-124 (nhr-124).